Reading from the N-terminus, the 68-residue chain is Conotoxin Eb11.7 (68 aa).

Positions 1 to 26 are cleaved as a signal peptide; sequence MMFRLTSVSCFLLVIVCLNLFQVVLT. 4 cysteine pairs are disulfide-bonded: C29/C43, C36/C48, C42/C52, and C47/C56. A Phenylalanine amide modification is found at F60. Residues 64–68 constitute a propeptide that is removed on maturation; the sequence is ATFQE.

Belongs to the conotoxin I2 superfamily. Expressed by the venom duct.

The protein localises to the secreted. The sequence is that of Conotoxin Eb11.7 from Conus eburneus (Ivory cone).